The primary structure comprises 3038 residues: Lovastatin nonaketide synthase, polyketide synthase component (3038 aa).

The region spanning 8-447 (NEPIVVVGSG…GTNAHAIIEE (440 aa)) is the Ketosynthase family 3 (KS3) domain. Catalysis depends on for beta-ketoacyl synthase activity residues Cys-181, His-320, and His-367. Residues 562 to 889 (IFTGQGAQWP…GKNDLDSFSR (328 aa)) form a malonyl-CoA:ACP transacylase (MAT) domain region. Ser-656 serves as the catalytic For malonyltransferase activity. A lovC-binding region spans residues 695-757 (AMLAAGMSFE…DESTFARLLK (63 aa)). Residues 953 to 1089 (HLLLGKLSEY…GQLALTIEDV (137 aa)) form an N-terminal hotdog fold region. Positions 953–1263 (HLLLGKLSEY…ENITFKPFSP (311 aa)) are dehydratase (DH) domain. Residues 953 to 1267 (HLLLGKLSEY…FKPFSPPDAS (315 aa)) enclose the PKS/mFAS DH domain. The active-site Proton acceptor; for dehydratase activity is the His-985. The tract at residues 1107–1267 (EEHPHMNRVN…FKPFSPPDAS (161 aa)) is C-terminal hotdog fold. Asp-1174 acts as the Proton donor; for dehydratase activity in catalysis. A methyltransferase (CMet) domain region spans residues 1443 to 1543 (LEIGAGTGGA…ARSLLKPGGQ (101 aa)). The segment at 2139-2437 (TLPTRVRSID…KIPEYRGAKA (299 aa)) is ketoreductase (KR) domain. Residues 2463–2538 (QIVIDGLSAK…DLANEAAARL (76 aa)) form the Carrier domain. Ser-2498 is modified (O-(pantetheine 4'-phosphoryl)serine). The tract at residues 2546-2602 (VAATDGGAESTDNTSENEVSGREDTDLSAAATITEPSSADEDDTEPGDEDVPRSHHP) is disordered. Positions 2583–2594 (SADEDDTEPGDE) are enriched in acidic residues. Positions 2602–2952 (PLSLGQEYSW…PTSNQPAPLF (351 aa)) are inactive Condensation domain.

As to quaternary structure, homodimer. Each MAT domain from the lovB homodimer binds one lovC molecule to form the final active lovB-lovC megasynthase complex. Pantetheine 4'-phosphate serves as cofactor.

It carries out the reaction holo-[lovastatin nonaketide synthase] + 9 malonyl-CoA + S-adenosyl-L-methionine + 11 NADPH + 19 H(+) = dihydromonacolin L-[lovastatin nonaketide synthase] + S-adenosyl-L-homocysteine + 9 CO2 + 11 NADP(+) + 9 CoA + 6 H2O. Its pathway is polyketide biosynthesis; lovastatin biosynthesis. Functionally, lovastatin nonaketide synthase; part of the gene cluster that mediates the biosynthesis of lovastatin (also known as mevinolin, mevacor or monacolin K), a hypolipidemic inhibitor of (3S)-hydroxymethylglutaryl-coenzyme A (HMG-CoA) reductase (HMGR). The first step in the biosynthesis of lovastatin is the production of dihydromonacolin L acid by the lovastatin nonaketide synthase lovB and the trans-acting enoyl reductase lovC (called the lovB-lovC megasynthase complex) via condensation of one acetyl-CoA unit and 8 malonyl-CoA units. The formation of the LovB/C complex is essential for the integrity of the catalytic chamber to the complete total synthesis of DML acid. Dihydromonacolin L acid is released from lovB by the thioesterase lovG. Next, dihydromonacolin L acid is oxidized by the dihydromonacolin L monooxygenase lovA twice to form monacolin J acid. The 2-methylbutyrate moiety of lovastatin is synthesized by the lovastatin diketide synthase lovF via condensation of one acetyl-CoA unit and one malonyl-CoA unit. Finally, the covalent attachment of this moiety to monacolin J acid is catalyzed by the transesterase lovD to yield lovastatin. LovD has broad substrate specificity and can also convert monacolin J to simvastatin using alpha-dimethylbutanoyl-S-methyl-3-mercaptopropionate (DMB-S-MMP) as the thioester acyl donor, and can also catalyze the reverse reaction and function as hydrolase in vitro. LovD has much higher activity with LovF-bound 2-methylbutanoate than with free diketide substrates. The protein is Lovastatin nonaketide synthase, polyketide synthase component of Aspergillus terreus.